We begin with the raw amino-acid sequence, 130 residues long: Small ribosomal subunit protein uS11 (130 aa).

This sequence belongs to the universal ribosomal protein uS11 family. Part of the 30S ribosomal subunit. Interacts with proteins S7 and S18. Binds to IF-3.

Located on the platform of the 30S subunit, it bridges several disparate RNA helices of the 16S rRNA. Forms part of the Shine-Dalgarno cleft in the 70S ribosome. This is Small ribosomal subunit protein uS11 from Syntrophus aciditrophicus (strain SB).